The chain runs to 396 residues: Cyclic GMP-AMP synthase-like receptor (396 aa).

ATP contacts are provided by residues S63 and 75–77 (EFD). Residues E75, D77, and D194 each contribute to the Mg(2+) site. GTP is bound at residue D194. ATP is bound by residues 241–244 (QEQE), K262, and 275–279 (SYYLK). The Mn(2+) site is built by V286, E287, and D292. A disordered region spans residues 376–396 (IMNGGNPQQSANAENGSCLSM). Polar residues predominate over residues 380–396 (GNPQQSANAENGSCLSM).

It belongs to the mab-21 family. Mg(2+) is required as a cofactor. The cofactor is Mn(2+).

The catalysed reaction is GTP + ATP = 2',3'-cGAMP + 2 diphosphate. It catalyses the reaction GTP + ATP = pppGp(2'-5')A + diphosphate. The enzyme catalyses pppGp(2'-5')A = 2',3'-cGAMP + diphosphate. Its function is as follows. Nucleotidyltransferase that catalyzes the formation of cyclic GMP-AMP (2',3'-cGAMP) from ATP and GTP and plays a key role in innate immunity. Acts as a key sensor of double-stranded RNA (dsRNA), the presence of dsRNA in the cytoplasm being a danger signal that triggers the immune responses. Directly binds dsRNA, activating the nucleotidyltransferase activity, leading to synthesis of 2',3'-cGAMP, a second messenger that binds to and activates Sting, thereby triggering the immune response via activation of the NF-kappa-B transcription factor. In Aethina tumida (Small hive beetle), this protein is Cyclic GMP-AMP synthase-like receptor.